The following is a 528-amino-acid chain: Beta-hexosaminidase subunit alpha (528 aa).

A signal peptide spans 1-22 (MAGCRLWVSLLLAAALACLATA). Residues 23–88 (LWPWPQYIQT…PRPSFSNKQQ (66 aa)) constitute a propeptide that is removed on maturation. A disulfide bond links C58 and C104. N-linked (GlcNAc...) asparagine glycans are attached at residues N115, N157, and N295. The cysteines at positions 277 and 328 are disulfide-linked. E323 serves as the catalytic Proton donor. Residues 422-423 (NR) form a critical for hydrolysis GM2 gangliosides region. N487 carries an N-linked (GlcNAc...) asparagine glycan. C504 and C521 form a disulfide bridge.

Belongs to the glycosyl hydrolase 20 family. There are 3 beta-hexosaminidase isozymes: isozyme A (hexosaminidase A) is a heterodimer composed of one subunit alpha and one subunit beta (chain A and B); isozyme B (hexosaminidase B) is a homodimer of two beta subunits (two chains A and B); isozyme S (hexosaminidase S) is a homodimer of two alpha subunits. The composition of the dimer (isozyme A versus isozyme S) has a significant effect on the substrate specificity of the alpha subunit active site. In terms of tissue distribution, ubiquitous. Most abundant in testis, adrenal, epididymis and heart. Low levels seen in the liver.

It is found in the lysosome. It catalyses the reaction Hydrolysis of terminal non-reducing N-acetyl-D-hexosamine residues in N-acetyl-beta-D-hexosaminides.. The enzyme catalyses N-acetyl-beta-D-galactosaminyl-(1-&gt;4)-beta-D-3-sulfogalactosyl-(1-&gt;4)-beta-D-glucosyl-(1&lt;-&gt;1')-ceramide + H2O = a beta-D-3-sulfogalactosyl-(1-&gt;4)-beta-D-glucosyl-(1&lt;-&gt;1')-ceramide + N-acetyl-beta-D-galactosamine. The catalysed reaction is a ganglioside GM2 (d18:1(4E)) + H2O = a ganglioside GM3 (d18:1(4E)) + N-acetyl-beta-D-galactosamine. It carries out the reaction a ganglioside GM2 + H2O = a ganglioside GM3 + N-acetyl-beta-D-galactosamine. It catalyses the reaction beta-D-GalNAc-(1-&gt;4)-alpha-L-IdoA-(1-&gt;3)-beta-D-GalNAc-4-sulfate-(1-&gt;4)-alpha-L-IdoA-(1-&gt;3)-D-GalNAc-4-sulfate + H2O = alpha-L-IdoA-(1-&gt;3)-beta-D-GalNAc-4-sulfate-(1-&gt;4)-alpha-L-IdoA-(1-&gt;3)-D-GalNAc-4-sulfate + N-acetyl-D-galactosamine. The enzyme catalyses N-acetyl-beta-D-6-sulfogalactosaminyl-(1-&gt;4)-alpha-L-iduronyl-(1-&gt;3)-N-acetyl-D-6-sulfogalactosamine + H2O = alpha-L-iduronyl-(1-&gt;3)-N-acetyl-D-6-sulfogalactosamine + N-acetyl-D-6-sulfogalactosamine. Its activity is regulated as follows. Addition of GM2A stimulates the hydrolysis of sulfated glycosphingolipid SM2 and the ganglioside GM2. Hydrolyzes the non-reducing end N-acetyl-D-hexosamine and/or sulfated N-acetyl-D-hexosamine of glycoconjugates, such as the oligosaccharide moieties from proteins and neutral glycolipids, or from certain mucopolysaccharides. The isozyme S is as active as the isozyme A on the anionic bis-sulfated glycans, the chondroitin-6-sulfate trisaccharide (C6S-3), and the dermatan sulfate pentasaccharide, and the sulfated glycosphingolipid SM2. The isozyme B does not hydrolyze each of these substrates, however hydrolyzes efficiently neutral oligosaccharide. Only the isozyme A is responsible for the degradation of GM2 gangliosides in the presence of GM2A. The polypeptide is Beta-hexosaminidase subunit alpha (Mus musculus (Mouse)).